Consider the following 223-residue polypeptide: Cytotoxic T-lymphocyte protein 4 (223 aa).

Positions 1–35 (MACSGFQSHGAWLELTSRTWPCTALFSLLFIPVFS) are cleaved as a signal peptide. Residues 38–161 (MHVAQPAVVL…IDPEPCPDSD (124 aa)) are Extracellular-facing. In terms of domain architecture, Ig-like V-type spans 39–140 (HVAQPAVVLA…VELLYPPPYY (102 aa)). Residues 46-50 (VLANS) are homodimerization. Disulfide bonds link Cys58/Cys129 and Cys85/Cys103. Residue Asn113 is glycosylated (N-linked (GlcNAc...) asparagine). Residues 134–139 (LYPPPY) are important for interaction with CD80 and CD86. N-linked (GlcNAc...) asparagine glycosylation occurs at Asn145. Positions 150–155 (YVIDPE) are homodimerization. Residues 162-182 (FLLWILAAVSSGLFFYSFLIT) traverse the membrane as a helical segment. Topologically, residues 183–223 (AVSLSKMLKKRSPLTTGVYVKMPPTEPECEKQFQPYFIPIN) are cytoplasmic. The residue at position 201 (Tyr201) is a Phosphotyrosine; by TXK and JAK2.

Homodimer; disulfide-linked. Binds to CD80/B7-1 and CD86/B7.2. Interacts with ICOSLG. In terms of processing, N-glycosylation is important for dimerization. Post-translationally, phosphorylation at Tyr-201 prevents binding to the AP-2 adapter complex, blocks endocytosis, and leads to retention of CTLA4 on the cell surface.

Its subcellular location is the cell membrane. Its function is as follows. Inhibitory receptor acting as a major negative regulator of T-cell responses. The affinity of CTLA4 for its natural B7 family ligands, CD80 and CD86, is considerably stronger than the affinity of their cognate stimulatory coreceptor CD28. The sequence is that of Cytotoxic T-lymphocyte protein 4 (CTLA4) from Sus scrofa (Pig).